Consider the following 704-residue polypeptide: Elongation factor G (704 aa).

Residues 8–290 (ARYRNIGISA…AVIEYLPAPT (283 aa)) enclose the tr-type G domain. Residues 17-24 (AHIDAGKT), 88-92 (DTPGH), and 142-145 (NKMD) contribute to the GTP site.

The protein belongs to the TRAFAC class translation factor GTPase superfamily. Classic translation factor GTPase family. EF-G/EF-2 subfamily.

It localises to the cytoplasm. Its function is as follows. Catalyzes the GTP-dependent ribosomal translocation step during translation elongation. During this step, the ribosome changes from the pre-translocational (PRE) to the post-translocational (POST) state as the newly formed A-site-bound peptidyl-tRNA and P-site-bound deacylated tRNA move to the P and E sites, respectively. Catalyzes the coordinated movement of the two tRNA molecules, the mRNA and conformational changes in the ribosome. This is Elongation factor G from Proteus mirabilis (strain HI4320).